Here is a 404-residue protein sequence, read N- to C-terminus: Cysteine desulfurase IscS (404 aa).

Pyridoxal 5'-phosphate contacts are provided by residues 75–76 (AT), N155, Q183, and 203–205 (TSH). N6-(pyridoxal phosphate)lysine is present on K206. Residue T243 coordinates pyridoxal 5'-phosphate. C328 functions as the Cysteine persulfide intermediate in the catalytic mechanism. C328 serves as a coordination point for [2Fe-2S] cluster.

The protein belongs to the class-V pyridoxal-phosphate-dependent aminotransferase family. NifS/IscS subfamily. As to quaternary structure, homodimer. Forms a heterotetramer with IscU, interacts with other sulfur acceptors. Requires pyridoxal 5'-phosphate as cofactor.

It localises to the cytoplasm. It carries out the reaction (sulfur carrier)-H + L-cysteine = (sulfur carrier)-SH + L-alanine. It participates in cofactor biosynthesis; iron-sulfur cluster biosynthesis. Its function is as follows. Master enzyme that delivers sulfur to a number of partners involved in Fe-S cluster assembly, tRNA modification or cofactor biosynthesis. Catalyzes the removal of elemental sulfur atoms from cysteine to produce alanine. Functions as a sulfur delivery protein for Fe-S cluster synthesis onto IscU, an Fe-S scaffold assembly protein, as well as other S acceptor proteins. The sequence is that of Cysteine desulfurase IscS from Photobacterium profundum (strain SS9).